Consider the following 521-residue polypeptide: Matrix metalloproteinase-A (521 aa).

A signal peptide spans 1–21 (MFTGLHDILIILFLLVTLKIA). A propeptide spans 22-95 (QNVDHTKFLQ…EDHQKSRGKR (74 aa)) (activation peptide). A Cysteine switch motif is present at residues 78–85 (PRCGHPDV). Residue Cys-80 participates in Zn(2+) binding. Over 96–500 (YAPPQFKWKE…FCPRNEKLVL (405 aa)) the chain is Extracellular. N-linked (GlcNAc...) asparagine glycosylation is present at Asn-199. His-215 is a binding site for Zn(2+). Residue Glu-216 is part of the active site. Residues His-219 and His-225 each coordinate Zn(2+). The interval 259–298 (KASKKENEEEERKTENEDKRRKTEKDRGRTREHESDDIRP) is disordered. Positions 261-298 (SKKENEEEERKTENEDKRRKTEKDRGRTREHESDDIRP) are enriched in basic and acidic residues. Hemopexin repeat units follow at residues 300 to 347 (ECRV…FPGL), 391 to 443 (EKYV…WARV), and 444 to 492 (PKGV…FGFC). Residue Asn-469 is glycosylated (N-linked (GlcNAc...) asparagine). A helical transmembrane segment spans residues 501–521 (NSSSSHFSLIYATITILILIF).

The protein belongs to the peptidase M10A family. It depends on Zn(2+) as a cofactor. In terms of tissue distribution, expressed in the anchor cell. Expressed in the anchor cell throughout the L3 and the early L4 stage, but not in vulva precursor cells P6.p, P6.px, or P6.pxx. Expression in P6.pxxx cells begins in late-L4 stage. During L4 lethargus, expressed in all four vulE cells, but not in vulF cells. The expression in vulE cells persists in adulthood. In males, expressed in the linker cell (LC) from the early L4 stage until LC death during the L4-to-adult molt.

Its subcellular location is the cell membrane. It is found in the basolateral cell membrane. Functionally, metalloprotease which, together with cadherin cdh-3 and hemicentin him-4, plays a role in anchor cell (AC) invasion during postembryonic vulval development probably by promoting the degradation of the basement membrane separating the gonad from the vulva epithelium. In Caenorhabditis elegans, this protein is Matrix metalloproteinase-A.